A 506-amino-acid polypeptide reads, in one-letter code: FAD-linked oxidoreductase aurO (506 aa).

The region spanning 92–260 (ITAQPLAICR…AETDVRVYPM (169 aa)) is the FAD-binding PCMH-type domain.

The protein belongs to the oxygen-dependent FAD-linked oxidoreductase family. Might be part of an extracellular enzyme complex composed of GIP1, aurF, aurO and aurS. Requires FAD as cofactor.

The protein localises to the secreted. Its subcellular location is the extracellular space. It functions in the pathway pigment biosynthesis. FAD-linked oxidoreductase; part of the gene cluster that mediates the biosynthesis of aurofusarin, a red mycelium pigment which is acting as a mycotoxin. The first step is performed by the polyketide synthase which condenses one acetyl-CoA and 6 malonyl-CoA units to form the first intermediate, the cyclic heptaketide and yellow pigment YWA1. The C2 hydroxyl group in the pyrone ring of YWA1 is probably formed during ring closure by an aldol-type cyclization reaction. The dehydratase aurZ then acts as the first tailoring enzyme in the aurofusarin biosynthetic pathway by converting YWA1 to nor-rubrofusarin. Nor-rubrofusarin is then methylated to rubrofusarin by the O-methyltransferase aurJ. Rubrofusarin is then transported across the plasma membrane by the rubrofusarin-specific pump aurT for further enzymatic processing by the extracellular complex composed of GIP1, aurF, aurO and aurS to yield aurofusarin. The protein is FAD-linked oxidoreductase aurO of Gibberella zeae (strain ATCC MYA-4620 / CBS 123657 / FGSC 9075 / NRRL 31084 / PH-1) (Wheat head blight fungus).